The chain runs to 468 residues: 5-carboxymethyl-2-hydroxymuconate semialdehyde dehydrogenase (468 aa).

The active site involves Glu244. Catalysis depends on Cys278, which acts as the Nucleophile.

This sequence belongs to the aldehyde dehydrogenase family. In terms of assembly, homodimer.

It catalyses the reaction 2-hydroxy-5-carboxymethylmuconate semialdehyde + NAD(+) + H2O = (2E,4Z)-5-hydroxypenta-2,4-diene-1,2,5-tricarboxylate + NADH + 2 H(+). It functions in the pathway aromatic compound metabolism; 4-hydroxyphenylacetate degradation; pyruvate and succinate semialdehyde from 4-hydroxyphenylacetate: step 3/7. Catalyzes the conversion of 5-carboxymethyl-2-hydroxy-muconic semialdehyde (CHMS) into 5-carboxymethyl-2-hydroxy-muconic acid (CHM or (2E,4Z)-5-hydroxypenta-2,4-diene-1,2,5-tricarboxylate). Is involved in a meta-cleavage pathway for the catabolism of 4-hydroxyphenylacetate (4-HPA) via homoprotocatechuate (HPC or 3,4-dihydroxyphenylacetate). This is 5-carboxymethyl-2-hydroxymuconate semialdehyde dehydrogenase from Escherichia coli.